Consider the following 160-residue polypeptide: RxLR effector protein PexRD44 (160 aa).

The N-terminal stretch at 1–21 (MRLLLWVLISMLSIALSSCAA) is a signal peptide. Residues 54–76 (RFLRGESSKIVNLKQEEGVFEER) carry the RxLR-dEER motif.

It belongs to the RxLR effector family.

It is found in the secreted. Its subcellular location is the host cell membrane. It localises to the host nucleus. The protein localises to the host nucleolus. In terms of biological role, effector that is involved in host plant infection. Contributes to virulence during the early infection stage, by inhibiting plant defense responses induced by both PAMP-triggered immunity (PTI) and effector-triggered immunity (ETI). This Phytophthora infestans (strain T30-4) (Potato late blight agent) protein is RxLR effector protein PexRD44.